Reading from the N-terminus, the 328-residue chain is Ferredoxin--NADP reductase 1 (328 aa).

5 residues coordinate FAD: Glu37, Lys45, Tyr49, Val89, and Thr310.

The protein belongs to the ferredoxin--NADP reductase type 2 family. As to quaternary structure, homodimer. It depends on FAD as a cofactor.

The enzyme catalyses 2 reduced [2Fe-2S]-[ferredoxin] + NADP(+) + H(+) = 2 oxidized [2Fe-2S]-[ferredoxin] + NADPH. In Latilactobacillus sakei subsp. sakei (strain 23K) (Lactobacillus sakei subsp. sakei), this protein is Ferredoxin--NADP reductase 1.